Consider the following 295-residue polypeptide: Ribosomal protein L11 methyltransferase (295 aa).

Threonine 146, glycine 167, aspartate 189, and asparagine 231 together coordinate S-adenosyl-L-methionine.

The protein belongs to the methyltransferase superfamily. PrmA family.

Its subcellular location is the cytoplasm. The enzyme catalyses L-lysyl-[protein] + 3 S-adenosyl-L-methionine = N(6),N(6),N(6)-trimethyl-L-lysyl-[protein] + 3 S-adenosyl-L-homocysteine + 3 H(+). Functionally, methylates ribosomal protein L11. This Vibrio campbellii (strain ATCC BAA-1116) protein is Ribosomal protein L11 methyltransferase.